The primary structure comprises 215 residues: HTH-type transcriptional repressor FabR (215 aa).

Residues 10-70 (KTRRSLVEAA…TMVDESGLML (61 aa)) form the HTH tetR-type domain. Residues 33–52 (SLREVAREAGIAPTSFYRHF) constitute a DNA-binding region (H-T-H motif).

Homodimer.

It localises to the cytoplasm. Represses the transcription of fabB, involved in unsaturated fatty acid (UFA) biosynthesis. By controlling UFA production, FabR directly influences the physical properties of the membrane bilayer. This is HTH-type transcriptional repressor FabR from Shigella boydii serotype 18 (strain CDC 3083-94 / BS512).